The following is a 202-amino-acid chain: Probable nicotinate-nucleotide adenylyltransferase (202 aa).

Belongs to the NadD family.

It catalyses the reaction nicotinate beta-D-ribonucleotide + ATP + H(+) = deamido-NAD(+) + diphosphate. Its pathway is cofactor biosynthesis; NAD(+) biosynthesis; deamido-NAD(+) from nicotinate D-ribonucleotide: step 1/1. Functionally, catalyzes the reversible adenylation of nicotinate mononucleotide (NaMN) to nicotinic acid adenine dinucleotide (NaAD). The protein is Probable nicotinate-nucleotide adenylyltransferase of Clostridium perfringens (strain SM101 / Type A).